Here is a 258-residue protein sequence, read N- to C-terminus: Imidazole glycerol phosphate synthase subunit HisF (258 aa).

Catalysis depends on residues Asp-11 and Asp-130.

It belongs to the HisA/HisF family. In terms of assembly, heterodimer of HisH and HisF.

It is found in the cytoplasm. The enzyme catalyses 5-[(5-phospho-1-deoxy-D-ribulos-1-ylimino)methylamino]-1-(5-phospho-beta-D-ribosyl)imidazole-4-carboxamide + L-glutamine = D-erythro-1-(imidazol-4-yl)glycerol 3-phosphate + 5-amino-1-(5-phospho-beta-D-ribosyl)imidazole-4-carboxamide + L-glutamate + H(+). It functions in the pathway amino-acid biosynthesis; L-histidine biosynthesis; L-histidine from 5-phospho-alpha-D-ribose 1-diphosphate: step 5/9. Functionally, IGPS catalyzes the conversion of PRFAR and glutamine to IGP, AICAR and glutamate. The HisF subunit catalyzes the cyclization activity that produces IGP and AICAR from PRFAR using the ammonia provided by the HisH subunit. This Yersinia pseudotuberculosis serotype O:3 (strain YPIII) protein is Imidazole glycerol phosphate synthase subunit HisF.